The primary structure comprises 198 residues: GTP-binding protein Di-Ras1 (198 aa).

Residues 17-22 (GVGKSS), 33-39 (RDTYIPT), 61-65 (DTTGS), 121-125 (NKCDE), Ala-151, and 151-152 (AK) each bind GTP. An Effector region motif is present at residues 36–44 (YIPTIEDTY). Positions 178 to 192 (DGKRSGKQKRTDRVK) are enriched in basic and acidic residues. Positions 178–198 (DGKRSGKQKRTDRVKGKCTLM) are disordered. Cysteine methyl ester is present on Cys-195. Cys-195 is lipidated: S-geranylgeranyl cysteine. Positions 196-198 (TLM) are cleaved as a propeptide — removed in mature form.

The protein belongs to the small GTPase superfamily. Di-Ras family. As to expression, highly expressed in heart and brain.

The protein localises to the cell membrane. Its function is as follows. Displays low GTPase activity and exists predominantly in the GTP-bound form. This chain is GTP-binding protein Di-Ras1 (DIRAS1), found in Homo sapiens (Human).